Reading from the N-terminus, the 92-residue chain is LYR motif-containing protein 4A (92 aa).

Belongs to the complex I LYR family.

This is LYR motif-containing protein 4A (lyrm4a) from Salmo salar (Atlantic salmon).